A 651-amino-acid chain; its full sequence is MGDLSSLTPGGSMGLQVNRGSQSSLEGAPATAPEPHSLGILHASYSVSHRVRPWWDITSCRQQWTRQILKDVSLYVESGQIMCILGSSGSGKTTLLDAMSGRLGRAGTFLGEVYVNGRALRREQFQDCFSYVLQSDTLLSSLTVRETLHYTALLAIRRGNPGSFQKKVEAVMAELSLSHVADRLIGNYSLGGISTGERRRVSIAAQLLQDPKVMLFDEPTTGLDCMTANQIVVLLVELARRNRIVVLTIHQPRSELFQLFDKIAILSFGELIFCGTPAEMLDFFNDCGYPCPEHSNPFDFYMDLTSVDTQSKEREIETSKRVQMIESAYKKSAICHKTLKNIERMKHLKTLPMVPFKTKDSPGVFSKLGVLLRRVTRNLVRNKLAVITRLLQNLIMGLFLLFFVLRVRSNVLKGAIQDRVGLLYQFVGATPYTGMLNAVNLFPVLRAVSDQESQDGLYQKWQMMLAYALHVLPFSVVATMIFSSVCYWTLGLHPEVARFGYFSAALLAPHLIGEFLTLVLLGIVQNPNIVNSVVALLSIAGVLVGSGFLRNIQEMPIPFKIISYFTFQKYCSEILVVNEFYGLNFTCGSSNVSVTTNPMCAFTQGIQFIEKTCPGATSRFTMNFLILYSFIPALVILGIVVFKIRDHLISR.

The interval 1 to 32 is disordered; the sequence is MGDLSSLTPGGSMGLQVNRGSQSSLEGAPATA. Residues 1 to 383 lie on the Cytoplasmic side of the membrane; the sequence is MGDLSSLTPG…RVTRNLVRNK (383 aa). The ABC transporter domain maps to 52–293; the sequence is RPWWDITSCR…FNDCGYPCPE (242 aa). Residue 86 to 93 participates in ATP binding; sequence GSSGSGKT. A helical transmembrane segment spans residues 384-404; the sequence is LAVITRLLQNLIMGLFLLFFV. Positions 388–645 constitute an ABC transmembrane type-2 domain; sequence TRLLQNLIMG…ILGIVVFKIR (258 aa). Residues 405–421 lie on the Extracellular side of the membrane; it reads LRVRSNVLKGAIQDRVG. Residues 422-442 traverse the membrane as a helical segment; sequence LLYQFVGATPYTGMLNAVNLF. The Cytoplasmic segment spans residues 443–467; that stretch reads PVLRAVSDQESQDGLYQKWQMMLAY. Residues 468–489 form a helical membrane-spanning segment; it reads ALHVLPFSVVATMIFSSVCYWT. Residues 490–500 are Extracellular-facing; that stretch reads LGLHPEVARFG. A helical transmembrane segment spans residues 501-521; the sequence is YFSAALLAPHLIGEFLTLVLL. Over 522–528 the chain is Cytoplasmic; that stretch reads GIVQNPN. A helical membrane pass occupies residues 529-549; sequence IVNSVVALLSIAGVLVGSGFL. Residues 550 to 623 are Extracellular-facing; that stretch reads RNIQEMPIPF…PGATSRFTMN (74 aa). Asn-584 and Asn-591 each carry an N-linked (GlcNAc...) asparagine glycan. A helical transmembrane segment spans residues 624-644; it reads FLILYSFIPALVILGIVVFKI. The Cytoplasmic portion of the chain corresponds to 645 to 651; that stretch reads RDHLISR.

Belongs to the ABC transporter superfamily. ABCG family. Eye pigment precursor importer (TC 3.A.1.204) subfamily. In terms of assembly, heterodimer with ABCG8. Mg(2+) serves as cofactor. N-glycosylated. Strongly expressed in the liver, lower levels in the small intestine and colon.

Its subcellular location is the cell membrane. It localises to the apical cell membrane. The catalysed reaction is cholesterol(in) + ATP + H2O = cholesterol(out) + ADP + phosphate + H(+). It carries out the reaction sitosterol(in) + ATP + H2O = sitosterol(out) + ADP + phosphate + H(+). With respect to regulation, the ATPase activity of the heterodimer is stimulated by cholate. Taurocholate, glycocholate, taurochenodeoxycholate, glycochenodeoxycholate and taurodeoxycholate also stimulate ATPase activity, but to a lower degree. Glycodeoxycholate has no significant effect on ATPase activity. ATPase activity is inhibited by vanadate and by berillium fluoride. ABCG5 and ABCG8 form an obligate heterodimer that mediates Mg(2+)- and ATP-dependent sterol transport across the cell membrane. Plays an essential role in the selective transport of dietary plant sterols and cholesterol in and out of the enterocytes and in the selective sterol excretion by the liver into bile. Required for normal sterol homeostasis. The heterodimer with ABCG8 has ATPase activity. This chain is ATP-binding cassette sub-family G member 5, found in Homo sapiens (Human).